Here is a 161-residue protein sequence, read N- to C-terminus: Cyclic pyranopterin monophosphate synthase (161 aa).

Residues 75 to 77 (LCH) and 113 to 114 (ME) contribute to the substrate site. D128 is a catalytic residue.

Belongs to the MoaC family. In terms of assembly, homohexamer; trimer of dimers.

The enzyme catalyses (8S)-3',8-cyclo-7,8-dihydroguanosine 5'-triphosphate = cyclic pyranopterin phosphate + diphosphate. It participates in cofactor biosynthesis; molybdopterin biosynthesis. Functionally, catalyzes the conversion of (8S)-3',8-cyclo-7,8-dihydroguanosine 5'-triphosphate to cyclic pyranopterin monophosphate (cPMP). This Salmonella heidelberg (strain SL476) protein is Cyclic pyranopterin monophosphate synthase.